Reading from the N-terminus, the 204-residue chain is N-(5'-phosphoribosyl)anthranilate isomerase (204 aa).

It belongs to the TrpF family.

The catalysed reaction is N-(5-phospho-beta-D-ribosyl)anthranilate = 1-(2-carboxyphenylamino)-1-deoxy-D-ribulose 5-phosphate. It participates in amino-acid biosynthesis; L-tryptophan biosynthesis; L-tryptophan from chorismate: step 3/5. In Bacillus cereus (strain ZK / E33L), this protein is N-(5'-phosphoribosyl)anthranilate isomerase.